The chain runs to 159 residues: Ribosomal RNA large subunit methyltransferase H (159 aa).

Residues Leu76, Gly107, and 126–131 (LSSLTL) contribute to the S-adenosyl-L-methionine site.

Belongs to the RNA methyltransferase RlmH family. In terms of assembly, homodimer.

The protein resides in the cytoplasm. The enzyme catalyses pseudouridine(1915) in 23S rRNA + S-adenosyl-L-methionine = N(3)-methylpseudouridine(1915) in 23S rRNA + S-adenosyl-L-homocysteine + H(+). Specifically methylates the pseudouridine at position 1915 (m3Psi1915) in 23S rRNA. The chain is Ribosomal RNA large subunit methyltransferase H from Cupriavidus pinatubonensis (strain JMP 134 / LMG 1197) (Cupriavidus necator (strain JMP 134)).